The sequence spans 149 residues: Macrodomain Ter protein (149 aa).

It belongs to the MatP family. Homodimer.

The protein localises to the cytoplasm. Required for spatial organization of the terminus region of the chromosome (Ter macrodomain) during the cell cycle. Prevents early segregation of duplicated Ter macrodomains during cell division. Binds specifically to matS, which is a 13 bp signature motif repeated within the Ter macrodomain. The sequence is that of Macrodomain Ter protein from Vibrio cholerae serotype O1 (strain ATCC 39315 / El Tor Inaba N16961).